Reading from the N-terminus, the 1002-residue chain is MIKLSLLLSLASFTAVLANQRPRCQRCPVSSSKYFQQNNLLESRFQNEVQRLCARRVREESSSESSSSSSSEDCSRRRRRPHREWEDSCSSSYSSCSSTDSCSSSAPCPPPVAQRCDIELKTPIILMGERIYEFLKNYEDQYKKAVLLFLTNILSQISGFNPVFPGGDYDALIEQLKTLGVTVPANTAAELAAIDAAESSALTRAIQANAQKVISDLLTRVSAMCYLDIMSLVNSGLLASQVSSVFNNIQPIITIAGNDLFAKQMAVFQKLSKTLISTAVTNALQGNRAKFTRFYTTQTSNLQTSVQNSSKTLTSELKKLATDTETAFTAFANAEISTPVRRIFRRSITSSGFEDAEEGEDKDNTGEGEEGEDKDNTGEGEEGEDKDNTGEGEEGEDKDNTGEGEEGEDKDNTGEGEEGEDKDNTGEGEEGEDKDNTGEGEEGEDKDNTGEGEEGEDKDNTGEGEEGEDKDNTGEGEEGEDKDNTGEGEEGEDKDNTGEGEEGEDKDNTGEGEEGEDKDNTGEGEEGEDKDNTGEGEEGEDKDNTGEGEEGEDKDNTGEGEEGEDKDNTGEGEEGEEGEDKDNTGEGEEGEDKDNTGEGEEGEDKDNTGEGEEGEEGEDKDNTGEGEEGEDKDNTGEGEEGEDKDNTGEGEEGEDKDNTGDAEEGEEGEDKDSTGEGEEGEDKDNTGEGEEGEEGEDKDNTGEGEEGEEGEDKDNTGEGEEGEEGEDKDNTGEGEEGEDKDNTGEGEEGEDKDNTGEGDEGEDKDNTGEGEEGEEGEDKDNTGEGEEGEDKDNTGEGEEGEEGEDKDNTGEGEEGEEGEDKDNTGEGEEGEEGEDKDNTGEGEEGEDKDNTGEGEEGEDKDNTGEGEEGEDKDNTGEGEEGEEGEDKDNTGEGEEGEDKDNTGEGEEGEDKDNTGEGEEGEDKDNTGEGEEGEDKDNTGEGEEGEDKDNTGEGEEGEEGEDKDNTGDAEEGEEGEDKDNTGDAEEGEEGEDKDNTEEGEETT.

The signal sequence occupies residues 1–18; the sequence is MIKLSLLLSLASFTAVLA. N-linked (GlcNAc...) asparagine glycosylation is present at Asn-308. The tract at residues 349-1002 is disordered; it reads TSSGFEDAEE…DNTEEGEETT (654 aa). Positions 354 to 1002 are enriched in acidic residues; that stretch reads EDAEEGEDKD…DNTEEGEETT (649 aa). 24 tandem repeats follow at residues 357 to 368, 369 to 380, 381 to 392, 393 to 404, 405 to 416, 417 to 428, 429 to 440, 441 to 452, 453 to 464, 465 to 476, 477 to 488, 489 to 500, 501 to 512, 513 to 524, 525 to 536, 537 to 548, 549 to 560, 561 to 572, 576 to 587, 588 to 599, 600 to 611, 615 to 626, 627 to 638, and 639 to 650. Positions 357-998 are 50 X 12 AA tandem repeats of E-E-G-E-D-K-D-N-T-G-E-G; the sequence is EEGEDKDNTG…GEDKDNTEEG (642 aa). Residues 651 to 662 form a 25; degenerate repeat; it reads EEGEDKDNTGDA. A 26; degenerate repeat occupies 663–674; it reads EEGEEGEDKDST. 22 tandem repeats follow at residues 678-689, 693-704, 708-719, 723-734, 735-746, 747-758, 759-770, 774-785, 786-797, 801-812, 816-827, 831-842, 843-854, 855-866, 867-878, 882-893, 894-905, 906-915, 918-929, 930-941, 942-953, and 957-969. The 49; degenerate repeat unit spans residues 972-983; sequence EEGEDKDNTGDA. The 50; degenerate repeat unit spans residues 987–998; sequence EEGEDKDNTEEG.

Component of a complex composed of at least SWP1 and SWP2.

It is found in the spore. Its subcellular location is the perispore. In terms of biological role, spore wall component. This Encephalitozoon intestinalis (Microsporidian parasite) protein is Spore wall protein 2 (SWP2).